A 202-amino-acid polypeptide reads, in one-letter code: NADH-quinone oxidoreductase subunit B (202 aa).

Positions 81, 82, 146, and 176 each coordinate [4Fe-4S] cluster.

The protein belongs to the complex I 20 kDa subunit family. NDH-1 is composed of 14 different subunits. Subunits NuoB, C, D, E, F, and G constitute the peripheral sector of the complex. The cofactor is [4Fe-4S] cluster.

The protein resides in the cell inner membrane. It carries out the reaction a quinone + NADH + 5 H(+)(in) = a quinol + NAD(+) + 4 H(+)(out). Its function is as follows. NDH-1 shuttles electrons from NADH, via FMN and iron-sulfur (Fe-S) centers, to quinones in the respiratory chain. The immediate electron acceptor for the enzyme in this species is believed to be ubiquinone. Couples the redox reaction to proton translocation (for every two electrons transferred, four hydrogen ions are translocated across the cytoplasmic membrane), and thus conserves the redox energy in a proton gradient. This Bradyrhizobium diazoefficiens (strain JCM 10833 / BCRC 13528 / IAM 13628 / NBRC 14792 / USDA 110) protein is NADH-quinone oxidoreductase subunit B.